We begin with the raw amino-acid sequence, 127 residues long: Small ribosomal subunit protein uS11 (127 aa).

Belongs to the universal ribosomal protein uS11 family. In terms of assembly, part of the 30S ribosomal subunit. Interacts with proteins S7 and S18. Binds to IF-3.

In terms of biological role, located on the platform of the 30S subunit, it bridges several disparate RNA helices of the 16S rRNA. Forms part of the Shine-Dalgarno cleft in the 70S ribosome. This is Small ribosomal subunit protein uS11 from Prosthecochloris aestuarii (strain DSM 271 / SK 413).